Reading from the N-terminus, the 807-residue chain is Glycerol-3-phosphate acyltransferase (807 aa).

The HXXXXD motif motif lies at 308-313 (CHRSHM).

This sequence belongs to the GPAT/DAPAT family.

It is found in the cell inner membrane. It catalyses the reaction sn-glycerol 3-phosphate + an acyl-CoA = a 1-acyl-sn-glycero-3-phosphate + CoA. Its pathway is phospholipid metabolism; CDP-diacylglycerol biosynthesis; CDP-diacylglycerol from sn-glycerol 3-phosphate: step 1/3. This chain is Glycerol-3-phosphate acyltransferase, found in Shewanella sp. (strain W3-18-1).